A 343-amino-acid polypeptide reads, in one-letter code: MTTTRTITRPDDWHLHLRDGEVLKDTVRDTSRYMGRAVIMPNLVPPVTNTALALAYQARIFAAQPKAGFKPLMTLYLTDNTSADEIKKAKASGQIYAAKLYPAGATTNSESGVTSVEKIKEALQAMQEVGMLLLIHGEVTASDIDIFDREEIFLQKVLAPIVASYPNLKIVLEHITTANAVDFVNNAGDNVAATITAHHLMFNRNHMLVGGIRPHLYCLPILKRNIHQQALIKAATSGAKKFFLGTDSAPHAVNRKEAACGCAGCYTAHAAIELYAEVFEQAGALDKLEAFASFNGPDFYNLPRNSDTITLEKSAWDVPASMSFGNQQVVPIKANEQMLWKVL.

The Zn(2+) site is built by His14 and His16. Substrate-binding positions include 16 to 18 (HLR) and Asn42. The Zn(2+) site is built by Lys99, His136, and His174. Lys99 carries the post-translational modification N6-carboxylysine. Residue His136 participates in substrate binding. Leu219 is a substrate binding site. Residue Asp247 coordinates Zn(2+). Residue Asp247 is part of the active site. Substrate is bound by residues His251 and Ala263.

This sequence belongs to the metallo-dependent hydrolases superfamily. DHOase family. Class II DHOase subfamily. In terms of assembly, homodimer. Zn(2+) serves as cofactor.

The catalysed reaction is (S)-dihydroorotate + H2O = N-carbamoyl-L-aspartate + H(+). Its pathway is pyrimidine metabolism; UMP biosynthesis via de novo pathway; (S)-dihydroorotate from bicarbonate: step 3/3. In terms of biological role, catalyzes the reversible cyclization of carbamoyl aspartate to dihydroorotate. The sequence is that of Dihydroorotase from Psychromonas ingrahamii (strain DSM 17664 / CCUG 51855 / 37).